A 176-amino-acid chain; its full sequence is Cytidylate kinase (176 aa).

7 to 15 (GPPGSGTTS) is a binding site for ATP.

It belongs to the cytidylate kinase family. Type 2 subfamily.

It localises to the cytoplasm. It catalyses the reaction CMP + ATP = CDP + ADP. It carries out the reaction dCMP + ATP = dCDP + ADP. The sequence is that of Cytidylate kinase from Methanosphaerula palustris (strain ATCC BAA-1556 / DSM 19958 / E1-9c).